Reading from the N-terminus, the 363-residue chain is UDP-3-O-acylglucosamine N-acyltransferase (363 aa).

His266 acts as the Proton acceptor in catalysis.

This sequence belongs to the transferase hexapeptide repeat family. LpxD subfamily. Homotrimer.

The catalysed reaction is a UDP-3-O-[(3R)-3-hydroxyacyl]-alpha-D-glucosamine + a (3R)-hydroxyacyl-[ACP] = a UDP-2-N,3-O-bis[(3R)-3-hydroxyacyl]-alpha-D-glucosamine + holo-[ACP] + H(+). It functions in the pathway bacterial outer membrane biogenesis; LPS lipid A biosynthesis. In terms of biological role, catalyzes the N-acylation of UDP-3-O-acylglucosamine using 3-hydroxyacyl-ACP as the acyl donor. Is involved in the biosynthesis of lipid A, a phosphorylated glycolipid that anchors the lipopolysaccharide to the outer membrane of the cell. The sequence is that of UDP-3-O-acylglucosamine N-acyltransferase from Bordetella bronchiseptica (strain ATCC BAA-588 / NCTC 13252 / RB50) (Alcaligenes bronchisepticus).